We begin with the raw amino-acid sequence, 100 residues long: Eukaryotic translation initiation factor 4E-binding protein 3 (100 aa).

The YXXXXLphi motif motif lies at 40–46 (YDRKFLL). Residues 81 to 100 (LKEQETEEEIPDDAQFEMDI) are disordered. The span at 85–100 (ETEEEIPDDAQFEMDI) shows a compositional bias: acidic residues. The TOS motif motif lies at 96 to 100 (FEMDI).

This sequence belongs to the eIF4E-binding protein family. As to quaternary structure, interacts with EIF4E. Interacts with RPA2 (in unphosphorylated form via N-terminus); the interaction enhances EIF4EBP3-mediated inhibition of EIF4E-mediated mRNA nuclear export. Post-translationally, phosphorylated. In terms of tissue distribution, expression is highest in skeletal muscle, heart, kidney, and pancreas, whereas there is very little expression in brain and thymus.

The protein localises to the cytoplasm. It localises to the nucleus. Its function is as follows. Repressor of translation initiation that regulates EIF4E activity by preventing its assembly into the eIF4F complex: the hypophosphorylated form competes with EIF4G1/EIF4G3 and strongly binds to EIF4E, leading to repression of translation. In contrast, the hyperphosphorylated form dissociates from EIF4E, allowing interaction between EIF4G1/EIF4G3 and EIF4E, leading to initiation of translation. Inhibits EIF4E-mediated mRNA nuclear export. The protein is Eukaryotic translation initiation factor 4E-binding protein 3 (EIF4EBP3) of Homo sapiens (Human).